The following is a 325-amino-acid chain: GMP reductase (325 aa).

C174 acts as the Thioimidate intermediate in catalysis. 203–226 (IIADGGIRTHGDIAKSVRFGATMV) contacts NADP(+).

It belongs to the IMPDH/GMPR family. GuaC type 2 subfamily.

The catalysed reaction is IMP + NH4(+) + NADP(+) = GMP + NADPH + 2 H(+). Functionally, catalyzes the irreversible NADPH-dependent deamination of GMP to IMP. It functions in the conversion of nucleobase, nucleoside and nucleotide derivatives of G to A nucleotides, and in maintaining the intracellular balance of A and G nucleotides. This chain is GMP reductase, found in Enterococcus faecalis (strain ATCC 700802 / V583).